A 62-amino-acid chain; its full sequence is Small ribosomal subunit protein eS27 (62 aa).

Zn(2+) is bound by residues cysteine 17, cysteine 20, cysteine 36, and cysteine 39. Residues 17–39 (CPDCENEQIIFEKASTVVDCVVC) form a C4-type zinc finger.

It belongs to the eukaryotic ribosomal protein eS27 family. In terms of assembly, part of the 30S ribosomal subunit. Zn(2+) serves as cofactor.

The sequence is that of Small ribosomal subunit protein eS27 from Methanosphaerula palustris (strain ATCC BAA-1556 / DSM 19958 / E1-9c).